Reading from the N-terminus, the 640-residue chain is 1-deoxy-D-xylulose-5-phosphate synthase (640 aa).

Thiamine diphosphate is bound by residues His75 and 117 to 119 (GHA). Residue Asp146 coordinates Mg(2+). Residues 147-148 (AA), Asn175, and Glu370 each bind thiamine diphosphate. Asn175 is a Mg(2+) binding site.

This sequence belongs to the transketolase family. DXPS subfamily. Homodimer. Requires Mg(2+) as cofactor. It depends on thiamine diphosphate as a cofactor.

It catalyses the reaction D-glyceraldehyde 3-phosphate + pyruvate + H(+) = 1-deoxy-D-xylulose 5-phosphate + CO2. The protein operates within metabolic intermediate biosynthesis; 1-deoxy-D-xylulose 5-phosphate biosynthesis; 1-deoxy-D-xylulose 5-phosphate from D-glyceraldehyde 3-phosphate and pyruvate: step 1/1. Its function is as follows. Catalyzes the acyloin condensation reaction between C atoms 2 and 3 of pyruvate and glyceraldehyde 3-phosphate to yield 1-deoxy-D-xylulose-5-phosphate (DXP). The polypeptide is 1-deoxy-D-xylulose-5-phosphate synthase (Chlamydia trachomatis serovar A (strain ATCC VR-571B / DSM 19440 / HAR-13)).